We begin with the raw amino-acid sequence, 381 residues long: uncharacterized protein (381 aa).

Residues 3–23 form a helical membrane-spanning segment; that stretch reads GAVAGLVFLAVLVIFAIIVVA.

It belongs to the band 7/mec-2 family.

Its subcellular location is the membrane. This is an uncharacterized protein from Mycobacterium bovis (strain ATCC BAA-935 / AF2122/97).